The following is a 144-amino-acid chain: Transcriptional regulator SlyA (144 aa).

Residues 2–135 (ESPLGSDLAR…LNKIISKLEK (134 aa)) form the HTH marR-type domain. A DNA-binding region (H-T-H motif) is located at residues 49–72 (QIQLAKAIGIEQPSLVRTLDQLEE).

The protein belongs to the SlyA family. Homodimer.

Transcription regulator that can specifically activate or repress expression of target genes. The chain is Transcriptional regulator SlyA from Blochmanniella pennsylvanica (strain BPEN).